The following is a 252-amino-acid chain: 5'-nucleotidase SurE (252 aa).

Residues Asp-8, Asp-9, Ser-39, and Asn-95 each coordinate a divalent metal cation.

It belongs to the SurE nucleotidase family. A divalent metal cation serves as cofactor.

Its subcellular location is the cytoplasm. It catalyses the reaction a ribonucleoside 5'-phosphate + H2O = a ribonucleoside + phosphate. Functionally, nucleotidase that shows phosphatase activity on nucleoside 5'-monophosphates. The chain is 5'-nucleotidase SurE from Clostridium botulinum (strain Loch Maree / Type A3).